A 113-amino-acid polypeptide reads, in one-letter code: Nucleoid-associated protein sync_0026 (113 aa).

It belongs to the YbaB/EbfC family. Homodimer.

The protein resides in the cytoplasm. It localises to the nucleoid. Binds to DNA and alters its conformation. May be involved in regulation of gene expression, nucleoid organization and DNA protection. The sequence is that of Nucleoid-associated protein sync_0026 from Synechococcus sp. (strain CC9311).